We begin with the raw amino-acid sequence, 128 residues long: Large ribosomal subunit protein bL20c (128 aa).

The protein belongs to the bacterial ribosomal protein bL20 family. In terms of assembly, component of the chloroplast large ribosomal subunit (LSU). Mature 70S chloroplast ribosomes of higher plants consist of a small (30S) and a large (50S) subunit. The 30S small subunit contains 1 molecule of ribosomal RNA (16S rRNA) and 24 different proteins. The 50S large subunit contains 3 rRNA molecules (23S, 5S and 4.5S rRNA) and 33 different proteins.

It localises to the plastid. The protein localises to the chloroplast. Its function is as follows. Component of the chloroplast ribosome (chloro-ribosome), a dedicated translation machinery responsible for the synthesis of chloroplast genome-encoded proteins, including proteins of the transcription and translation machinery and components of the photosynthetic apparatus. The chain is Large ribosomal subunit protein bL20c (rpl20) from Spinacia oleracea (Spinach).